We begin with the raw amino-acid sequence, 63 residues long: Large ribosomal subunit protein uL29 (63 aa).

The protein belongs to the universal ribosomal protein uL29 family.

The protein is Large ribosomal subunit protein uL29 of Stutzerimonas stutzeri (strain A1501) (Pseudomonas stutzeri).